Consider the following 59-residue polypeptide: Large ribosomal subunit protein bL32 (59 aa).

Disordered regions lie at residues 1–23 (MAVQ…DFLT) and 35–59 (EVHL…TKND). Positions 49–59 (RGKKVVKTKND) are enriched in basic residues.

This sequence belongs to the bacterial ribosomal protein bL32 family.

The polypeptide is Large ribosomal subunit protein bL32 (Burkholderia ambifaria (strain MC40-6)).